A 231-amino-acid chain; its full sequence is Caspase-like protein (231 aa).

Belongs to the peptidase C14A family.

The chain is Caspase-like protein from Trichoplusia ni ascovirus 2c (TnAV-2c).